The following is a 536-amino-acid chain: Probable monofunctional riboflavin biosynthesis protein RIBA 3, chloroplastic (536 aa).

The N-terminal 43 residues, 1 to 43, are a transit peptide targeting the chloroplast; the sequence is MDRVLLSSQLSSQTVVNTRVQQGSGGINSIGFAVIRKGSLKLR. Residues 44-310 are inactive DHBP synthase; sequence CYAIGGLGGG…IADLIRYRRK (267 aa). D-ribulose 5-phosphate contacts are provided by residues 133-134, D138, and 248-252; these read GD and RAGHT. Residues 311–536 form a GTP cyclohydrolase II region; sequence REKLVELIAV…GDQDEDDTHN (226 aa). GTP is bound at residue 361–365; the sequence is RVHSE. Residues C366, C377, and C379 each coordinate Zn(2+). Residues Q382, 405–407, and T427 each bind GTP; that span reads EGR. D439 (proton acceptor; for GTP cyclohydrolase activity) is an active-site residue. R441 serves as the catalytic Nucleophile; for GTP cyclohydrolase activity. GTP is bound by residues T462 and K467. Positions 507-536 are disordered; the sequence is YGSDLPGNVPEEFLNPDDIAGDQDEDDTHN. The span at 525–536 shows a compositional bias: acidic residues; that stretch reads IAGDQDEDDTHN.

In the N-terminal section; belongs to the DHBP synthase family. This sequence in the C-terminal section; belongs to the GTP cyclohydrolase II family. It depends on Zn(2+) as a cofactor.

The protein localises to the plastid. It localises to the chloroplast. The catalysed reaction is GTP + 4 H2O = 2,5-diamino-6-hydroxy-4-(5-phosphoribosylamino)-pyrimidine + formate + 2 phosphate + 3 H(+). It participates in cofactor biosynthesis; riboflavin biosynthesis; 5-amino-6-(D-ribitylamino)uracil from GTP: step 1/4. Involved in riboflavin biosynthesis. Catalyzes the conversion of GTP to 2,5-diamino-6-ribosylamino-4(3H)-pyrimidinone 5'-phosphate (DARP), formate and pyrophosphate. This Oryza sativa subsp. japonica (Rice) protein is Probable monofunctional riboflavin biosynthesis protein RIBA 3, chloroplastic (RIBA3).